Reading from the N-terminus, the 1958-residue chain is Echinoderm microtubule-associated protein-like 6 (1958 aa).

WD repeat units lie at residues 59–100 (GHND…TVSL), 104–145 (VHTH…LLAS), 148–187 (GHSDRIFDISWDPYQPNRVVSCGVKHIKFWTLCGNALTAK), 195–233 (GDLQTILCLACAKEDITYSGALNGDIYVWKGLNLVRTIQ), 235–273 (AHSAGIFSMYACEEGFATGGRDGCIRLWDTDFKPITKID), 280–321 (GYKG…LILQ), 323–362 (HCEGELWALALHPKKPLAVTGSDDRSVRLWSLADHALIAR), 364–403 (NMEEAVRSVAFSPDGSQLALGMKDGSFIVLRVRDMTEVVH), 406–445 (DRKEVIHEMKFSPDGSYLAVGSNDGPVDVYAVAQRYKKIG), and 561–601 (GHSA…VSNG). The segment at 603-626 (LETAPQEGGADSYSEESDSDLSDV) is disordered. Over residues 615–626 (YSEESDSDLSDV) the composition is skewed to acidic residues. 10 WD repeats span residues 725–766 (GHDD…CLSL), 770–811 (QHQR…KIAT), 814–853 (GHKDKIFVVKCNPHHVDKLVTVGIKHIKFWQQAGGGFTSK), 861–900 (GKLETMMCVSYGRMEDLVFSGAATGDIFIWKDILLLKTVK), 901–940 (AHDGPVFAMYALDKGFVTGGKDGIVELWDDMFERCLKTYA), 996–1035 (HMEGEVWGLAAHPLLPICATVSDDKTLRIWELSAQHRMLA), 1038–1077 (KLKKGGRCCAFSPDGKALAVGLNDGSFLVVNADTVEDMVS), 1080–1120 (HRKE…RVGI), 1191–1230 (SDITDVNAASLTKDCSLLATGDDFGFVKLFSYPVKGQHAR), and 1236–1276 (GHSA…TQES). The span at 1322-1337 (KPHQQLKEVSVEERPP) shows a compositional bias: basic and acidic residues. Positions 1322–1353 (KPHQQLKEVSVEERPPVSRAAPQPEKLQKNNI) are disordered. WD repeat units follow at residues 1412 to 1456 (EHTD…TLSM), 1460 to 1501 (FHSK…KVAS), 1504 to 1543 (GHLERIFVVEFRPDSDTQFVSVGVKHMKFWTLAGSALLYK), 1553 to 1591 (AKMQTMLSVAFGANNLTFTGAINGDVYVWKDHFLIRLVA), 1593 to 1638 (AHTG…CRAF), 1685 to 1724 (HMEGEIWGLATHPSKDLFISASNDGTARIWDLADKKLLNK), 1726 to 1767 (SLGH…GKKR), 1768 to 1807 (DRKSAIQDIRISPDNRFLAVGSSEHTVDFYDLTQGTNLNR), 1880 to 1919 (ADKADVNCACVTHAGLNIVTGDDFGLVKLFDFPCTEKFAK), and 1925 to 1958 (GHSAHVTNIRFSYDDKYVVSTGGDDCSVFVWRCL).

This sequence belongs to the WD repeat EMAP family.

The protein localises to the cytoplasm. It localises to the cytoskeleton. May modify the assembly dynamics of microtubules, such that microtubules are slightly longer, but more dynamic. This chain is Echinoderm microtubule-associated protein-like 6 (EML6), found in Homo sapiens (Human).